The primary structure comprises 297 residues: Protease HtpX homolog (297 aa).

Helical transmembrane passes span Ile14 to Leu34 and Tyr39 to Phe59. His143 lines the Zn(2+) pocket. Glu144 is an active-site residue. His147 provides a ligand contact to Zn(2+). 2 consecutive transmembrane segments (helical) span residues Ile153–Gly173 and Ile196–Val216. Residue Glu225 participates in Zn(2+) binding.

Belongs to the peptidase M48B family. The cofactor is Zn(2+).

The protein localises to the cell membrane. This Streptococcus uberis (strain ATCC BAA-854 / 0140J) protein is Protease HtpX homolog.